The following is a 226-amino-acid chain: Cytidylate kinase (226 aa).

10–18 (GPASSGKST) is a binding site for ATP.

It localises to the cytoplasm. It carries out the reaction CMP + ATP = CDP + ADP. It catalyses the reaction dCMP + ATP = dCDP + ADP. In Streptococcus pyogenes serotype M6 (strain ATCC BAA-946 / MGAS10394), this protein is Cytidylate kinase.